The following is a 359-amino-acid chain: Phosphoserine aminotransferase (359 aa).

Residue arginine 41 coordinates L-glutamate. Pyridoxal 5'-phosphate-binding positions include 75–76, tryptophan 101, threonine 152, aspartate 171, and glutamine 194; that span reads AS. Residue lysine 195 is modified to N6-(pyridoxal phosphate)lysine. 236–237 serves as a coordination point for pyridoxal 5'-phosphate; it reads NT.

It belongs to the class-V pyridoxal-phosphate-dependent aminotransferase family. SerC subfamily. In terms of assembly, homodimer. Pyridoxal 5'-phosphate serves as cofactor.

It is found in the cytoplasm. The catalysed reaction is O-phospho-L-serine + 2-oxoglutarate = 3-phosphooxypyruvate + L-glutamate. It carries out the reaction 4-(phosphooxy)-L-threonine + 2-oxoglutarate = (R)-3-hydroxy-2-oxo-4-phosphooxybutanoate + L-glutamate. Its pathway is amino-acid biosynthesis; L-serine biosynthesis; L-serine from 3-phospho-D-glycerate: step 2/3. It participates in cofactor biosynthesis; pyridoxine 5'-phosphate biosynthesis; pyridoxine 5'-phosphate from D-erythrose 4-phosphate: step 3/5. Functionally, catalyzes the reversible conversion of 3-phosphohydroxypyruvate to phosphoserine and of 3-hydroxy-2-oxo-4-phosphonooxybutanoate to phosphohydroxythreonine. This Acinetobacter baylyi (strain ATCC 33305 / BD413 / ADP1) protein is Phosphoserine aminotransferase.